The following is a 1156-amino-acid chain: ATP-dependent RNA helicase glh-4 (1156 aa).

Disordered stretches follow at residues 1–81 (MSFS…GAPS), 194–213 (TGVGASEVPTSKPSSFGQQP), 231–423 (SSSG…DSST), and 436–522 (HRAS…SGLG). Over residues 12–22 (AEVKVAEDVPE) the composition is skewed to basic and acidic residues. Residues 24–34 (NVPPPVEPPRA) are compositionally biased toward pro residues. 3 stretches are compositionally biased toward polar residues: residues 60-73 (ITTSKTFGSQTTPK), 194-211 (TGVGASEVPTSKPSSFGQ), and 243-258 (TESSGFPTKETSTSQP). The span at 259–281 (GFGGDSSTGFGSGLKAGFGGHGA) shows a compositional bias: gly residues. Residues 307 to 319 (ASSSNESAFGQQS) show a composition bias toward polar residues. 2 stretches are compositionally biased toward gly residues: residues 321–332 (GFGGATKNGFGG) and 342–358 (SKAGFGGTSSSGIGGQK). Composition is skewed to polar residues over residues 362 to 371 (TESSGFPTKE) and 395 to 406 (PSTTDSSSGQQT). The span at 408–423 (GFGGASKPGFGGDSST) shows a compositional bias: gly residues. Polar residues-rich tracts occupy residues 440-451 (TAENSGLPTETT) and 464-476 (ASSSNESAFGQQS). Over residues 478–489 (GFGGATKNGFGG) the composition is skewed to gly residues. CCHC-type zinc fingers lie at residues 570-587 (RGCHNCGEEGHISKECDK), 593-610 (FPCRNCEQLGHFASDCDQ), 616-633 (GPCRNCGIEGHFAVDCDQ), 639-656 (GPCRNCGQEGHFAKDCQN), and 665-682 (EPCRRCAEEGHWGYECPT). The Q motif signature appears at 736–764 (SFDGFKILPQDLHDNLKRMKMNRPTPIQR). The 185-residue stretch at 767–951 (FFPIMHGNDV…LPKFVKEGYT (185 aa)) folds into the Helicase ATP-binding domain. 780 to 787 (AHTGSGKT) serves as a coordination point for ATP. The DEAD box signature appears at 897 to 900 (DEAD). A Helicase C-terminal domain is found at 986–1139 (GIDENTVTLL…EVPEWLTEGA (154 aa)). The disordered stretch occupies residues 1135 to 1156 (LTEGAGHQEEGGDDWNEQEQEW). The span at 1145 to 1156 (GGDDWNEQEQEW) shows a compositional bias: acidic residues.

Belongs to the DEAD box helicase family. DDX4/VASA subfamily. In terms of assembly, interacts (via C-terminus) with kgb-1.

The catalysed reaction is ATP + H2O = ADP + phosphate + H(+). Probable ATP-binding RNA helicase. May act redundantly with the P-granule component glh-1 to regulate the formation of the granular structure of P-granules in embryos. May protect somatic cells from excessive apoptosis during normal development. This chain is ATP-dependent RNA helicase glh-4, found in Caenorhabditis elegans.